Here is a 456-residue protein sequence, read N- to C-terminus: Chromosomal replication initiator protein DnaA (456 aa).

A domain I, interacts with DnaA modulators region spans residues 1–85 (MDADLNKLWE…EIKFIIESDL (85 aa)). The segment at 85-117 (LNNEDELNNSDNSDKNRDKNSRRNIVVNDEMSS) is domain II. The interval 118 to 334 (TLNPKYTFNS…GALIRIIAYS (217 aa)) is domain III, AAA+ region. Gly-162, Gly-164, Lys-165, and Thr-166 together coordinate ATP. A domain IV, binds dsDNA region spans residues 335–456 (SLTNREVTVD…SDITKKVSQN (122 aa)).

This sequence belongs to the DnaA family. Oligomerizes as a right-handed, spiral filament on DNA at oriC.

It is found in the cytoplasm. Functionally, plays an essential role in the initiation and regulation of chromosomal replication. ATP-DnaA binds to the origin of replication (oriC) to initiate formation of the DNA replication initiation complex once per cell cycle. Binds the DnaA box (a 9 base pair repeat at the origin) and separates the double-stranded (ds)DNA. Forms a right-handed helical filament on oriC DNA; dsDNA binds to the exterior of the filament while single-stranded (ss)DNA is stabiized in the filament's interior. The ATP-DnaA-oriC complex binds and stabilizes one strand of the AT-rich DNA unwinding element (DUE), permitting loading of DNA polymerase. After initiation quickly degrades to an ADP-DnaA complex that is not apt for DNA replication. Binds acidic phospholipids. In Clostridium botulinum (strain Eklund 17B / Type B), this protein is Chromosomal replication initiator protein DnaA.